Here is a 256-residue protein sequence, read N- to C-terminus: Probable ATP-dependent transporter slr0075 (256 aa).

The 245-residue stretch at 6–250 folds into the ABC transporter domain; that stretch reads LSIKNLTASV…EEKGYDFLDE (245 aa). 38–45 contacts ATP; that stretch reads GRNGSGKS.

It belongs to the ABC transporter superfamily. Ycf16 family.

The polypeptide is Probable ATP-dependent transporter slr0075 (Synechocystis sp. (strain ATCC 27184 / PCC 6803 / Kazusa)).